The sequence spans 257 residues: Large ribosomal subunit protein uL2 (257 aa).

Residues 207–226 form a disordered region; it reads VEHPFGGGNHQHIGKPSTIR.

Belongs to the universal ribosomal protein uL2 family. As to quaternary structure, component of the large ribosomal subunit.

Its subcellular location is the cytoplasm. Functionally, component of the large ribosomal subunit. The ribosome is a large ribonucleoprotein complex responsible for the synthesis of proteins in the cell. The chain is Large ribosomal subunit protein uL2 (rpl8) from Ictalurus punctatus (Channel catfish).